The primary structure comprises 708 residues: Capsid scaffolding protein (708 aa).

Residues H63, S132, and H157 each act as charge relay system in the active site. Disordered regions lie at residues 269–339 (ASAE…MSHP), 455–565 (HPSY…QQQR), and 593–619 (ALPS…SGGG). The span at 284–293 (PAAGARVPSS) shows a compositional bias: low complexity. Positions 294-311 (SPSPPVEPPSPVQPPALP) are enriched in pro residues. Over residues 326–339 (SPSEPAEAASMSHP) the composition is skewed to low complexity. Residues 333–352 (AASMSHPLSAAVPAATAPPG) are interaction with pAP. Residues 498–513 (KQHRHGGSGGHNKRRK) show a composition bias toward basic residues. 2 consecutive short sequence motifs (nuclear localization signal) follow at residues 510–515 (KRRKET) and 537–543 (RARKRLK). Positions 593–611 (ALPSAASSSPTTTTVCTPT) are enriched in low complexity. The tract at residues 688–708 (PPKDMVDLNRRIFVAALNKLE) is interaction with major capsid protein.

It belongs to the herpesviridae capsid scaffolding protein family. In terms of assembly, homomultimer. Interacts with major capsid protein. Exists in a monomer-dimer equilibrium with the dimer being the active species. Capsid scaffolding protein is cleaved by assemblin after formation of the spherical procapsid. As a result, the capsid obtains its mature, icosahedral shape. Cleavages occur at two or more sites: release (R-site) and maturation (M-site).

The protein localises to the host cytoplasm. Its subcellular location is the host nucleus. It catalyses the reaction Cleaves -Ala-|-Ser- and -Ala-|-Ala- bonds in the scaffold protein.. In terms of biological role, acts as a scaffold protein by binding major capsid protein in the cytoplasm, inducing the nuclear localization of both proteins. Multimerizes in the nucleus such as major capsid protein forms the icosahedral T=16 capsid. Autocatalytic cleavage releases the assembly protein, and subsequently abolishes interaction with major capsid protein. Cleavages products are evicted from the capsid before or during DNA packaging. Functionally, protease that plays an essential role in virion assembly within the nucleus. Catalyzes the cleavage of the assembly protein after formation of the spherical procapsid. By that cleavage, the capsid matures and gains its icosahedral shape. The cleavage sites seem to include -Ala-Ser-, -Ala-Ala-, as well as Ala-Thr bonds. Assemblin and cleavages products are evicted from the capsid before or during DNA packaging. Plays a major role in capsid assembly. Acts as a scaffold protein by binding major capsid protein. Multimerizes in the nucleus such as major capsid protein forms the icosahedral T=16 capsid. Cleaved by assemblin after capsid completion. The cleavages products are evicted from the capsid before or during DNA packaging. The sequence is that of Capsid scaffolding protein (UL80) from Homo sapiens (Human).